Here is a 340-residue protein sequence, read N- to C-terminus: Alcohol dehydrogenase (340 aa).

2 residues coordinate Zn(2+): Cys40 and His63.

Belongs to the zinc-containing alcohol dehydrogenase family. It depends on Zn(2+) as a cofactor.

The enzyme catalyses a primary alcohol + NAD(+) = an aldehyde + NADH + H(+). It catalyses the reaction a secondary alcohol + NAD(+) = a ketone + NADH + H(+). This Rhizobium meliloti (strain 1021) (Ensifer meliloti) protein is Alcohol dehydrogenase (adhA).